The chain runs to 194 residues: dITP/XTP pyrophosphatase (194 aa).

A substrate-binding site is contributed by Thr8–Lys13. Asp69 acts as the Proton acceptor in catalysis. Asp69 provides a ligand contact to Mg(2+). Residues Thr70, Phe150 to Asp153, Lys173, and His178 to Arg179 each bind substrate.

Belongs to the HAM1 NTPase family. Homodimer. Mg(2+) is required as a cofactor.

The enzyme catalyses XTP + H2O = XMP + diphosphate + H(+). The catalysed reaction is dITP + H2O = dIMP + diphosphate + H(+). It carries out the reaction ITP + H2O = IMP + diphosphate + H(+). Pyrophosphatase that catalyzes the hydrolysis of nucleoside triphosphates to their monophosphate derivatives, with a high preference for the non-canonical purine nucleotides XTP (xanthosine triphosphate), dITP (deoxyinosine triphosphate) and ITP. Seems to function as a house-cleaning enzyme that removes non-canonical purine nucleotides from the nucleotide pool, thus preventing their incorporation into DNA/RNA and avoiding chromosomal lesions. This Porphyromonas gingivalis (strain ATCC BAA-308 / W83) protein is dITP/XTP pyrophosphatase.